Here is a 521-residue protein sequence, read N- to C-terminus: Bifunctional purine biosynthesis protein PurH (521 aa).

One can recognise an MGS-like domain in the interval 1–145 (MIKQALISVS…KNHRDVTVVV (145 aa)).

It belongs to the PurH family.

It catalyses the reaction (6R)-10-formyltetrahydrofolate + 5-amino-1-(5-phospho-beta-D-ribosyl)imidazole-4-carboxamide = 5-formamido-1-(5-phospho-D-ribosyl)imidazole-4-carboxamide + (6S)-5,6,7,8-tetrahydrofolate. It carries out the reaction IMP + H2O = 5-formamido-1-(5-phospho-D-ribosyl)imidazole-4-carboxamide. It participates in purine metabolism; IMP biosynthesis via de novo pathway; 5-formamido-1-(5-phospho-D-ribosyl)imidazole-4-carboxamide from 5-amino-1-(5-phospho-D-ribosyl)imidazole-4-carboxamide (10-formyl THF route): step 1/1. Its pathway is purine metabolism; IMP biosynthesis via de novo pathway; IMP from 5-formamido-1-(5-phospho-D-ribosyl)imidazole-4-carboxamide: step 1/1. The polypeptide is Bifunctional purine biosynthesis protein PurH (Burkholderia orbicola (strain AU 1054)).